Consider the following 127-residue polypeptide: Fluoride-specific ion channel FluC (127 aa).

A run of 3 helical transmembrane segments spans residues 37 to 57, 68 to 88, and 102 to 122; these read TSFV…WLAL, LFLA…SLEV, and LYAG…LWMA. 2 residues coordinate Na(+): glycine 76 and threonine 79.

The protein belongs to the fluoride channel Fluc/FEX (TC 1.A.43) family.

The protein resides in the cell inner membrane. The catalysed reaction is fluoride(in) = fluoride(out). With respect to regulation, na(+) is not transported, but it plays an essential structural role and its presence is essential for fluoride channel function. Its function is as follows. Fluoride-specific ion channel. Important for reducing fluoride concentration in the cell, thus reducing its toxicity. The polypeptide is Fluoride-specific ion channel FluC (Hyphomonas neptunium (strain ATCC 15444)).